Reading from the N-terminus, the 209-residue chain is Ribonuclease HII (209 aa).

Positions 18–209 (SLVAGVDEVG…FKPVKALLER (192 aa)) constitute an RNase H type-2 domain. The a divalent metal cation site is built by D24, E25, and D116.

Belongs to the RNase HII family. The cofactor is Mn(2+). Requires Mg(2+) as cofactor.

It is found in the cytoplasm. It catalyses the reaction Endonucleolytic cleavage to 5'-phosphomonoester.. In terms of biological role, endonuclease that specifically degrades the RNA of RNA-DNA hybrids. The polypeptide is Ribonuclease HII (Shewanella oneidensis (strain ATCC 700550 / JCM 31522 / CIP 106686 / LMG 19005 / NCIMB 14063 / MR-1)).